Here is a 158-residue protein sequence, read N- to C-terminus: MQGHLSAWLVKHGLIHRSLGFDYQGIETLQIKPGDWHSIAVILYVYGYNYLRSQCAYDVAPGGLLASVYHLTRIEYGADQPEEVCIKVFAPRRDPRIPSVFWVWKSVDFQERESYDMLGISYDNHPRLKRILMPESWIGWPLRKDYIAPNFYEIQDAH.

This sequence belongs to the complex I 30 kDa subunit family. NDH is composed of at least 16 different subunits, 5 of which are encoded in the nucleus.

The protein localises to the plastid. Its subcellular location is the chloroplast thylakoid membrane. It carries out the reaction a plastoquinone + NADH + (n+1) H(+)(in) = a plastoquinol + NAD(+) + n H(+)(out). The enzyme catalyses a plastoquinone + NADPH + (n+1) H(+)(in) = a plastoquinol + NADP(+) + n H(+)(out). NDH shuttles electrons from NAD(P)H:plastoquinone, via FMN and iron-sulfur (Fe-S) centers, to quinones in the photosynthetic chain and possibly in a chloroplast respiratory chain. The immediate electron acceptor for the enzyme in this species is believed to be plastoquinone. Couples the redox reaction to proton translocation, and thus conserves the redox energy in a proton gradient. This chain is NAD(P)H-quinone oxidoreductase subunit J, chloroplastic, found in Lactuca sativa (Garden lettuce).